Reading from the N-terminus, the 233-residue chain is Phosphatidylserine decarboxylase proenzyme (233 aa).

The active-site Schiff-base intermediate with substrate; via pyruvic acid is Ser190. Position 190 is a pyruvic acid (Ser); by autocatalysis (Ser190).

The protein belongs to the phosphatidylserine decarboxylase family. PSD-A subfamily. Heterodimer of a large membrane-associated beta subunit and a small pyruvoyl-containing alpha subunit. Pyruvate serves as cofactor. Post-translationally, is synthesized initially as an inactive proenzyme. Formation of the active enzyme involves a self-maturation process in which the active site pyruvoyl group is generated from an internal serine residue via an autocatalytic post-translational modification. Two non-identical subunits are generated from the proenzyme in this reaction, and the pyruvate is formed at the N-terminus of the alpha chain, which is derived from the carboxyl end of the proenzyme. The post-translation cleavage follows an unusual pathway, termed non-hydrolytic serinolysis, in which the side chain hydroxyl group of the serine supplies its oxygen atom to form the C-terminus of the beta chain, while the remainder of the serine residue undergoes an oxidative deamination to produce ammonia and the pyruvoyl prosthetic group on the alpha chain.

It localises to the cell membrane. The enzyme catalyses a 1,2-diacyl-sn-glycero-3-phospho-L-serine + H(+) = a 1,2-diacyl-sn-glycero-3-phosphoethanolamine + CO2. The protein operates within phospholipid metabolism; phosphatidylethanolamine biosynthesis; phosphatidylethanolamine from CDP-diacylglycerol: step 2/2. Its function is as follows. Catalyzes the formation of phosphatidylethanolamine (PtdEtn) from phosphatidylserine (PtdSer). The chain is Phosphatidylserine decarboxylase proenzyme from Bartonella quintana (strain Toulouse) (Rochalimaea quintana).